The chain runs to 561 residues: Cloacin (561 aa).

Gly residues-rich tracts occupy residues 1 to 21 (MSGGDGRGPGNSGLGHNGGQA), 29 to 40 (SGKGGPSSGGGT), and 66 to 91 (FGNGGSKPGGNGGNSGNHSGSSGGGQ). 5 disordered regions span residues 1-93 (MSGG…GQSS), 254-273 (PKGIVAEKGDSRPAGFTAGG), 304-326 (VKQRQEEEKRRQQAWDAAHPEEG), 432-507 (KAAL…KRAR), and 530-561 (RASDGEHLGAFDPKTGKQVKGPDPKRNIKKYL). The interval 1-180 (MSGGDGRGPG…DTVTETPAST (180 aa)) is involved in the translocation of the protein across the cell membrane. Positions 200 to 420 (DERQHIAVVA…NAKLKAAQAS (221 aa)) are responsible for the receptor binding activity. Composition is skewed to basic and acidic residues over residues 306–326 (QRQEEEKRRQQAWDAAHPEEG) and 440–494 (ESRK…EGKP). Residues 421-561 (LNAMNDALSR…DPKRNIKKYL (141 aa)) are ribonuclease activity. The tract at residues 540–561 (FDPKTGKQVKGPDPKRNIKKYL) is binding of immunity protein.

This sequence belongs to the cloacin colicin family.

Its function is as follows. Inactivates ribosomes by hydrolyzing 16S RNA in 30S ribosomes at a specific site. In terms of biological role, colicins are polypeptide toxins produced by and active against E.coli and closely related bacteria. This chain is Cloacin (ccl), found in Escherichia coli.